Consider the following 598-residue polypeptide: Protein HIGH CHLOROPHYLL FLUORESCENCE PHENOTYPE 173, chloroplastic (598 aa).

A chloroplast-targeting transit peptide spans 1-79; it reads MVGSIVGSNM…ITTKESEETV (79 aa). The interval 42–106 is disordered; it reads VIPRAQSSSS…PTLKLDDVNP (65 aa). Residues 73-84 show a composition bias toward basic and acidic residues; the sequence is KESEETVAKKLD. Over residues 87 to 97 the composition is skewed to pro residues; sequence PPSPQSPPSPP.

Belongs to the NmrA-type oxidoreductase family. As to quaternary structure, component of a high molecular weight complex containing psbA mRNA, OHP1, OHP2 and HCF244, and PSII core proteins D1/D2, HCF136 and HCF173. Interacts with LPE1.

Its subcellular location is the plastid. The protein localises to the chloroplast membrane. It localises to the chloroplast thylakoid membrane. The protein resides in the chloroplast stroma. In terms of biological role, auxiliary factor required, together with HCF244, for the biogenesis of photosystem II (PSII), especially for the synthesis of the reaction center proteins (e.g. D1), via the regulation of the corresponding mRNA (e.g. psbA) translation initiation (ribosomal loading) and stabilization. This is Protein HIGH CHLOROPHYLL FLUORESCENCE PHENOTYPE 173, chloroplastic from Arabidopsis thaliana (Mouse-ear cress).